A 481-amino-acid polypeptide reads, in one-letter code: Arginine biosynthesis bifunctional protein ArgJ, chloroplastic (481 aa).

Thr225, Lys251, Thr262, Glu349, Asn476, and Thr481 together coordinate substrate. Thr262 (nucleophile) is an active-site residue.

It belongs to the ArgJ family. In terms of assembly, heterodimer of an alpha and a beta chain.

It localises to the plastid. Its subcellular location is the chloroplast. It catalyses the reaction N(2)-acetyl-L-ornithine + L-glutamate = N-acetyl-L-glutamate + L-ornithine. It carries out the reaction L-glutamate + acetyl-CoA = N-acetyl-L-glutamate + CoA + H(+). The protein operates within amino-acid biosynthesis; L-arginine biosynthesis; L-ornithine and N-acetyl-L-glutamate from L-glutamate and N(2)-acetyl-L-ornithine (cyclic): step 1/1. Its pathway is amino-acid biosynthesis; L-arginine biosynthesis; N(2)-acetyl-L-ornithine from L-glutamate: step 1/4. Functionally, catalyzes two activities which are involved in the cyclic version of arginine biosynthesis: the synthesis of acetylglutamate from glutamate and acetyl-CoA, and of ornithine by transacetylation between acetylornithine and glutamate. The sequence is that of Arginine biosynthesis bifunctional protein ArgJ, chloroplastic from Populus trichocarpa (Western balsam poplar).